Here is a 204-residue protein sequence, read N- to C-terminus: Urease accessory protein UreG (204 aa).

GTP is bound at residue 12-19 (GPVGSGKT).

The protein belongs to the SIMIBI class G3E GTPase family. UreG subfamily. In terms of assembly, homodimer. UreD, UreF and UreG form a complex that acts as a GTP-hydrolysis-dependent molecular chaperone, activating the urease apoprotein by helping to assemble the nickel containing metallocenter of UreC. The UreE protein probably delivers the nickel.

The protein resides in the cytoplasm. Facilitates the functional incorporation of the urease nickel metallocenter. This process requires GTP hydrolysis, probably effectuated by UreG. This chain is Urease accessory protein UreG, found in Pseudomonas aeruginosa (strain LESB58).